Here is a 462-residue protein sequence, read N- to C-terminus: Dipeptidyl peptidase 1 (462 aa).

Positions 1–24 (MGPWTHSLRAALLLVLLGVCTVSS) are cleaved as a signal peptide. Asparagine 29 and asparagine 53 each carry an N-linked (GlcNAc...) asparagine glycan. Disulfide bonds link cysteine 30–cysteine 118 and cysteine 54–cysteine 136. Positions 135–229 (ACFVGKKMAN…TDEIQQQILS (95 aa)) are excised as a propeptide. Asparagine 144 carries an N-linked (GlcNAc...) asparagine glycan. Intrachain disulfides connect cysteine 254/cysteine 297, cysteine 290/cysteine 330, and cysteine 320/cysteine 336. Cysteine 257 is a catalytic residue. An N-linked (GlcNAc...) asparagine glycan is attached at asparagine 275. Chloride-binding residues include phenylalanine 301 and tyrosine 303. A chloride-binding site is contributed by tyrosine 346. Residues histidine 404 and asparagine 426 contribute to the active site.

The protein belongs to the peptidase C1 family. In terms of assembly, tetramer of heterotrimers consisting of exclusion domain, heavy- and light chains. The cofactor is chloride. Broadly distributed, but higher levels found in liver, spleen, intestine, lung and kidney.

It is found in the lysosome. The enzyme catalyses Release of an N-terminal dipeptide, Xaa-Yaa-|-Zaa-, except when Xaa is Arg or Lys, or Yaa or Zaa is Pro.. Thiol protease. Has dipeptidylpeptidase activity. Active against a broad range of dipeptide substrates composed of both polar and hydrophobic amino acids. Proline cannot occupy the P1 position and arginine cannot occupy the P2 position of the substrate. Can act as both an exopeptidase and endopeptidase. Activates serine proteases such as elastase, cathepsin G and granzymes A and B. This Rattus norvegicus (Rat) protein is Dipeptidyl peptidase 1 (Ctsc).